The following is a 326-amino-acid chain: 2-dehydropantoate 2-reductase (326 aa).

NADP(+) contacts are provided by residues 7 to 12 (GAGAIG) and asparagine 103. Asparagine 103 provides a ligand contact to substrate. Lysine 205 acts as the Proton donor in catalysis. Residues asparagine 209, asparagine 213, and serine 274 each contribute to the substrate site. Residue glutamate 286 coordinates NADP(+).

Belongs to the ketopantoate reductase family.

It localises to the cytoplasm. It carries out the reaction (R)-pantoate + NADP(+) = 2-dehydropantoate + NADPH + H(+). It participates in cofactor biosynthesis; (R)-pantothenate biosynthesis; (R)-pantoate from 3-methyl-2-oxobutanoate: step 2/2. Functionally, catalyzes the NADPH-dependent reduction of ketopantoate into pantoic acid. The polypeptide is 2-dehydropantoate 2-reductase (Mesorhizobium japonicum (strain LMG 29417 / CECT 9101 / MAFF 303099) (Mesorhizobium loti (strain MAFF 303099))).